Here is a 397-residue protein sequence, read N- to C-terminus: Alanine racemase, biosynthetic (397 aa).

Lysine 42 (proton acceptor; specific for D-alanine) is an active-site residue. Lysine 42 is subject to N6-(pyridoxal phosphate)lysine. Arginine 136 contacts substrate. Tyrosine 257 (proton acceptor; specific for L-alanine) is an active-site residue. Methionine 305 provides a ligand contact to substrate. Residues 373 to 397 (ANRPTEAMSNPSRAKSRPMDKQALI) form a disordered region.

This sequence belongs to the alanine racemase family. Pyridoxal 5'-phosphate is required as a cofactor.

The catalysed reaction is L-alanine = D-alanine. It participates in amino-acid biosynthesis; D-alanine biosynthesis; D-alanine from L-alanine: step 1/1. The protein operates within cell wall biogenesis; peptidoglycan biosynthesis. Catalyzes the interconversion of L-alanine and D-alanine. Provides the D-alanine required for cell wall biosynthesis. The polypeptide is Alanine racemase, biosynthetic (alr) (Mesorhizobium japonicum (strain LMG 29417 / CECT 9101 / MAFF 303099) (Mesorhizobium loti (strain MAFF 303099))).